Reading from the N-terminus, the 379-residue chain is Succinate--CoA ligase [ADP-forming] subunit beta (379 aa).

The region spanning 9 to 236 (KEIARKYGIE…GRDATPYEKV (228 aa)) is the ATP-grasp domain. Residues Lys-46, 53 to 55 (GRG), Glu-92, Val-95, and Glu-100 contribute to the ATP site. Positions 192 and 206 each coordinate Mg(2+). Substrate is bound by residues Asn-256 and 313–315 (GIT).

This sequence belongs to the succinate/malate CoA ligase beta subunit family. Heterotetramer of two alpha and two beta subunits. Mg(2+) is required as a cofactor.

It carries out the reaction succinate + ATP + CoA = succinyl-CoA + ADP + phosphate. The enzyme catalyses GTP + succinate + CoA = succinyl-CoA + GDP + phosphate. Its pathway is carbohydrate metabolism; tricarboxylic acid cycle; succinate from succinyl-CoA (ligase route): step 1/1. In terms of biological role, succinyl-CoA synthetase functions in the citric acid cycle (TCA), coupling the hydrolysis of succinyl-CoA to the synthesis of either ATP or GTP and thus represents the only step of substrate-level phosphorylation in the TCA. The beta subunit provides nucleotide specificity of the enzyme and binds the substrate succinate, while the binding sites for coenzyme A and phosphate are found in the alpha subunit. This is Succinate--CoA ligase [ADP-forming] subunit beta from Desulfurococcus amylolyticus (strain DSM 18924 / JCM 16383 / VKM B-2413 / 1221n) (Desulfurococcus kamchatkensis).